A 547-amino-acid chain; its full sequence is CTP synthase (547 aa).

The interval 1–265 is amidoligase domain; that stretch reads MARYIFITGG…DQAVLDAFQI (265 aa). Position 13 (Ser13) interacts with CTP. Residue Ser13 coordinates UTP. ATP contacts are provided by residues 14-19 and Asp71; that span reads SLGKGL. The Mg(2+) site is built by Asp71 and Glu139. Residues 146-148, 186-191, and Lys222 each bind CTP; these read DIE and KTKPTQ. UTP is bound by residues 186 to 191 and Lys222; that span reads KTKPTQ. In terms of domain architecture, Glutamine amidotransferase type-1 spans 291–546; the sequence is RIAVVGKYTQ…IRAAMDNERL (256 aa). Gly352 provides a ligand contact to L-glutamine. Cys379 serves as the catalytic Nucleophile; for glutamine hydrolysis. L-glutamine-binding positions include 380–383, Glu403, and Arg474; that span reads LGMQ. Catalysis depends on residues His519 and Glu521.

The protein belongs to the CTP synthase family. In terms of assembly, homotetramer.

It carries out the reaction UTP + L-glutamine + ATP + H2O = CTP + L-glutamate + ADP + phosphate + 2 H(+). The catalysed reaction is L-glutamine + H2O = L-glutamate + NH4(+). The enzyme catalyses UTP + NH4(+) + ATP = CTP + ADP + phosphate + 2 H(+). It participates in pyrimidine metabolism; CTP biosynthesis via de novo pathway; CTP from UDP: step 2/2. Allosterically activated by GTP, when glutamine is the substrate; GTP has no effect on the reaction when ammonia is the substrate. The allosteric effector GTP functions by stabilizing the protein conformation that binds the tetrahedral intermediate(s) formed during glutamine hydrolysis. Inhibited by the product CTP, via allosteric rather than competitive inhibition. Functionally, catalyzes the ATP-dependent amination of UTP to CTP with either L-glutamine or ammonia as the source of nitrogen. Regulates intracellular CTP levels through interactions with the four ribonucleotide triphosphates. In Paracoccus denitrificans (strain Pd 1222), this protein is CTP synthase.